The primary structure comprises 373 residues: 3-dehydroquinate synthase (373 aa).

NAD(+)-binding positions include 107-111 (GVIGD), 131-132 (TS), Lys144, and Lys153. The Zn(2+) site is built by Glu186, His249, and His267.

The protein belongs to the sugar phosphate cyclases superfamily. Dehydroquinate synthase family. Requires Co(2+) as cofactor. It depends on Zn(2+) as a cofactor. NAD(+) serves as cofactor.

It is found in the cytoplasm. The enzyme catalyses 7-phospho-2-dehydro-3-deoxy-D-arabino-heptonate = 3-dehydroquinate + phosphate. It functions in the pathway metabolic intermediate biosynthesis; chorismate biosynthesis; chorismate from D-erythrose 4-phosphate and phosphoenolpyruvate: step 2/7. Functionally, catalyzes the conversion of 3-deoxy-D-arabino-heptulosonate 7-phosphate (DAHP) to dehydroquinate (DHQ). The protein is 3-dehydroquinate synthase of Ruegeria sp. (strain TM1040) (Silicibacter sp.).